The following is a 366-amino-acid chain: Chorismate synthase (366 aa).

NADP(+)-binding residues include R48 and R54. Residues 125-127 (RSS), 238-239 (NA), G278, 293-297 (KPTSS), and R319 contribute to the FMN site.

Belongs to the chorismate synthase family. In terms of assembly, homotetramer. The cofactor is FMNH2.

The catalysed reaction is 5-O-(1-carboxyvinyl)-3-phosphoshikimate = chorismate + phosphate. Its pathway is metabolic intermediate biosynthesis; chorismate biosynthesis; chorismate from D-erythrose 4-phosphate and phosphoenolpyruvate: step 7/7. Catalyzes the anti-1,4-elimination of the C-3 phosphate and the C-6 proR hydrogen from 5-enolpyruvylshikimate-3-phosphate (EPSP) to yield chorismate, which is the branch point compound that serves as the starting substrate for the three terminal pathways of aromatic amino acid biosynthesis. This reaction introduces a second double bond into the aromatic ring system. This Burkholderia ambifaria (strain ATCC BAA-244 / DSM 16087 / CCUG 44356 / LMG 19182 / AMMD) (Burkholderia cepacia (strain AMMD)) protein is Chorismate synthase.